We begin with the raw amino-acid sequence, 152 residues long: Superoxide dismutase [Cu-Zn] 4AP (152 aa).

Residues histidine 45, histidine 47, and histidine 62 each coordinate Cu cation. Cysteine 56 and cysteine 145 are disulfide-bonded. 4 residues coordinate Zn(2+): histidine 62, histidine 70, histidine 79, and aspartate 82. Histidine 119 lines the Cu cation pocket.

Belongs to the Cu-Zn superoxide dismutase family. As to quaternary structure, homodimer. It depends on Cu cation as a cofactor. Zn(2+) is required as a cofactor.

The protein resides in the cytoplasm. It carries out the reaction 2 superoxide + 2 H(+) = H2O2 + O2. Functionally, destroys radicals which are normally produced within the cells and which are toxic to biological systems. This Zea mays (Maize) protein is Superoxide dismutase [Cu-Zn] 4AP (SODCC.2).